The following is a 352-amino-acid chain: Endophilin-A1 (352 aa).

Residues 1 to 21 (MSVAGLKKQFHKATQKVSEKV) are membrane-binding amphipathic helix. Residues 1-27 (MSVAGLKKQFHKATQKVSEKVGGAEGT) form a disordered region. Residues 1–125 (MSVAGLKKQF…EVGEAMRELS (125 aa)) form a binds and tubulates liposomes region. The BAR domain maps to 18-249 (SEKVGGAEGT…LEERIRQASS (232 aa)). The interval 60–87 (PNPASRAKLSMINTMSKIRGQEKGPGYP) is required for dimerization upon membrane association. Positions 181-248 (EELRQALEKF…RLEERIRQAS (68 aa)) form a coiled coil. Positions 245–257 (RQASSQPRREYQP) are enriched in basic and acidic residues. A disordered region spans residues 245-289 (RQASSQPRREYQPKPRMSLEFPTGDSTQPNGGLSHTGTPKPSGVQ). Position 262 is a phosphoserine (serine 262). Positions 268 to 283 (GDSTQPNGGLSHTGTP) are enriched in polar residues. Residues 290–349 (MDQPCCRALYDFEPENEGELGFKEGDIITLTNQIDENWYEGMLHGHSGFFPINYVEILVA) enclose the SH3 domain. Position 299 is a phosphotyrosine (tyrosine 299).

The protein belongs to the endophilin family. Monomer; in cytoplasm. Homodimer; when associated with membranes. Interacts with OPHN1. Interacts with SYNJ1. Interacts with DNM1. Interacts with MAP4K3; the interaction appears to regulate MAP4K3-mediated JNK activation. Interacts with PDCD6IP. Interacts with ATXN2. Interacts with ADAM9 and ADAM15 cytoplasmic tails. Interacts with BIN2. Interacts with TMEM108. Interacts with ADGRB2. In terms of tissue distribution, brain, mostly in frontal cortex. Expressed at high level in fetal cerebellum.

It localises to the cytoplasm. Its subcellular location is the membrane. The protein localises to the early endosome. It is found in the presynapse. In terms of biological role, implicated in synaptic vesicle endocytosis. May recruit other proteins to membranes with high curvature. Required for BDNF-dependent dendrite outgrowth. Cooperates with SH3GL2 to mediate BDNF-NTRK2 early endocytic trafficking and signaling from early endosomes. The polypeptide is Endophilin-A1 (SH3GL2) (Homo sapiens (Human)).